We begin with the raw amino-acid sequence, 230 residues long: Sugar fermentation stimulation protein homolog (230 aa).

It belongs to the SfsA family.

This Clostridium botulinum (strain ATCC 19397 / Type A) protein is Sugar fermentation stimulation protein homolog.